Here is a 287-residue protein sequence, read N- to C-terminus: ATP synthase gamma chain (287 aa).

The protein belongs to the ATPase gamma chain family. F-type ATPases have 2 components, CF(1) - the catalytic core - and CF(0) - the membrane proton channel. CF(1) has five subunits: alpha(3), beta(3), gamma(1), delta(1), epsilon(1). CF(0) has three main subunits: a, b and c.

It localises to the cell inner membrane. Functionally, produces ATP from ADP in the presence of a proton gradient across the membrane. The gamma chain is believed to be important in regulating ATPase activity and the flow of protons through the CF(0) complex. This Enterobacter sp. (strain 638) protein is ATP synthase gamma chain.